Here is a 160-residue protein sequence, read N- to C-terminus: Ureidoglycolate lyase (160 aa).

The protein belongs to the ureidoglycolate lyase family. Homodimer. The cofactor is Ni(2+).

It carries out the reaction (S)-ureidoglycolate = urea + glyoxylate. The protein operates within nitrogen metabolism; (S)-allantoin degradation. In terms of biological role, catalyzes the catabolism of the allantoin degradation intermediate (S)-ureidoglycolate, generating urea and glyoxylate. Involved in the utilization of allantoin as nitrogen source. This chain is Ureidoglycolate lyase, found in Salmonella typhimurium (strain LT2 / SGSC1412 / ATCC 700720).